A 353-amino-acid polypeptide reads, in one-letter code: Photosystem II D2 protein (353 aa).

Residue threonine 2 is modified to N-acetylthreonine. Position 2 is a phosphothreonine (threonine 2). A helical transmembrane segment spans residues 41-61 (CAYFALGGWFTGTTFVTSWYT). A chlorophyll a-binding site is contributed by histidine 118. A helical membrane pass occupies residues 125–141 (GFMLRQFELARSVQLRP). Residues glutamine 130 and asparagine 143 each coordinate pheophytin a. Residues 153-166 (VFVSVFLIYPLGQS) traverse the membrane as a helical segment. Histidine 198 is a binding site for chlorophyll a. A helical transmembrane segment spans residues 208 to 228 (AALLCAIHGATVENTLFEDGD). A plastoquinone is bound by residues histidine 215 and phenylalanine 262. Histidine 215 is a Fe cation binding site. Histidine 269 provides a ligand contact to Fe cation. A helical membrane pass occupies residues 279-295 (GLWMSALGVVGLALNLR).

This sequence belongs to the reaction center PufL/M/PsbA/D family. In terms of assembly, PSII is composed of 1 copy each of membrane proteins PsbA, PsbB, PsbC, PsbD, PsbE, PsbF, PsbH, PsbI, PsbJ, PsbK, PsbL, PsbM, PsbT, PsbX, PsbY, PsbZ, Psb30/Ycf12, at least 3 peripheral proteins of the oxygen-evolving complex and a large number of cofactors. It forms dimeric complexes. The D1/D2 heterodimer binds P680, chlorophylls that are the primary electron donor of PSII, and subsequent electron acceptors. It shares a non-heme iron and each subunit binds pheophytin, quinone, additional chlorophylls, carotenoids and lipids. There is also a Cl(-1) ion associated with D1 and D2, which is required for oxygen evolution. The PSII complex binds additional chlorophylls, carotenoids and specific lipids. serves as cofactor.

The protein localises to the plastid. It localises to the chloroplast thylakoid membrane. The enzyme catalyses 2 a plastoquinone + 4 hnu + 2 H2O = 2 a plastoquinol + O2. Its function is as follows. Photosystem II (PSII) is a light-driven water:plastoquinone oxidoreductase that uses light energy to abstract electrons from H(2)O, generating O(2) and a proton gradient subsequently used for ATP formation. It consists of a core antenna complex that captures photons, and an electron transfer chain that converts photonic excitation into a charge separation. The D1/D2 (PsbA/PsbD) reaction center heterodimer binds P680, the primary electron donor of PSII as well as several subsequent electron acceptors. D2 is needed for assembly of a stable PSII complex. The sequence is that of Photosystem II D2 protein from Ceratophyllum demersum (Rigid hornwort).